A 989-amino-acid polypeptide reads, in one-letter code: Serine-repeat antigen protein 5 (989 aa).

The N-terminal stretch at 1–16 (MKSYISLFFILCVIFN) is a signal peptide. Disordered regions lie at residues 26–91 (SQTG…EKQD) and 165–245 (LPSN…RNLQ). Composition is skewed to low complexity over residues 52 to 87 (QGSTGASQPGSSEPSNPVSSGHSVSTVSVSQTSTSS), 167 to 180 (SNGTTGEQGSSTGT), and 191 to 225 (SSSSSSSSSSSSSSSSSSSSSSSSSSSSSSSSSSS). The residue at position 167 (Ser167) is a Phosphoserine. A glycan (N-linked (GlcNAc...) asparagine) is linked at Asn168. Positions 208–245 (SSSSSSSSSSSSSSSSSSESLPANGPDSPTVKPPRNLQ) are interaction with PTKL. A glycan (N-linked (GlcNAc...) asparagine) is linked at Asn310. An interaction with host VTN region spans residues 365–382 (YKYLSEDIVSNFKEIKAE). An intrachain disulfide couples Cys437 to Cys489. Thr541 carries the phosphothreonine modification. 5 disulfides stabilise this stretch: Cys559/Cys564, Cys573/Cys602, Cys585/Cys628, Cys619/Cys664, and Cys747/Cys801. The thiol-protease-like stretch occupies residues 571 to 989 (NNCISNLQVE…TNNECYFCYV (419 aa)). Active-site residues include His754 and Asn779. The N-linked (GlcNAc...) asparagine glycan is linked to Asn820. Positions 835 to 878 (KASPEFYHNLYFKNFNVGKKNLFSEKEDNENNKKLGNNYIIFGQ) are cleaved as a propeptide — inhibition peptide. Position 858 is a phosphoserine (Ser858).

This sequence belongs to the peptidase C1 family. May interact (via C-terminus) with PTKL (via SAM domain). As to quaternary structure, interacts (via C-terminus) with human VTN (via hemopexin repeat 2); may form heterotetramers of two VTN and SERA5 P47 heterodimers; the interaction may protect merozoites from phagocytosis by host monocytes; VTN glycosylation appears to be dispensable for the interaction. In terms of assembly, monomer. Interacts with kinase CPK1/CDPK1 at the schizont stage. Post-translationally, phosphorylation by CPK1/CDPK1 increases SERA5 protease activity towards a synthetic peptide in vitro. In terms of processing, just prior to merozoite egress from host erythrocytes, proteolytically cleaved into multiple fragments. Cleaved by SUB1 into p47 and p73, p73 is further cleaved by SUB1 into p56 and p18 and p56 is further processed into p50 by an unidentified protease. p47 remains covalently associated with p18 via disulfide bond. p47 can be processed into p25n and p25c by SUB1. p25c and p25n remain associated with p18. Proteolytic processing is essential for merozoite egress from host erythrocytes. The cleavage of the propeptide to produce p50 is necessary for protease activity and to promote merozoite egress.

The protein resides in the parasitophorous vacuole. Its subcellular location is the secreted. It localises to the cell membrane. In terms of biological role, plays an essential role during the asexual blood stage development by controlling the kinetics of merozoite egress from host erythrocytes. Specifically, prevents premature rupture of the parasitophorous vacuole and host erythrocyte membranes. May prevent merozoite phagocytosis by host monocytes via interaction with host VTN at the merozoite surface. Plays a role in parasite growth. Functionally, protease activity is controversial. This is Serine-repeat antigen protein 5 from Plasmodium falciparum (isolate CDC / Honduras).